The following is a 287-amino-acid chain: BURP domain-containing protein 2 (287 aa).

A signal peptide spans 1–21 (MARSLAALLLLLVAAAGASHA). The 221-residue stretch at 67-287 (FFLEKDLFPG…PQDDMLWVRN (221 aa)) folds into the BURP domain.

Expressed in shoot.

The protein is BURP domain-containing protein 2 (BURP2) of Oryza sativa subsp. japonica (Rice).